The following is a 287-amino-acid chain: Fructose-1,6-bisphosphatase class 1 (287 aa).

Positions 67, 87, 89, and 90 each coordinate Mg(2+). Substrate-binding positions include 90-93, tyrosine 195, and lysine 225; that span reads DGSS. Residue glutamate 231 participates in Mg(2+) binding.

It belongs to the FBPase class 1 family. As to quaternary structure, homotetramer. Mg(2+) is required as a cofactor.

It localises to the cytoplasm. It carries out the reaction beta-D-fructose 1,6-bisphosphate + H2O = beta-D-fructose 6-phosphate + phosphate. The protein operates within carbohydrate biosynthesis; gluconeogenesis. This is Fructose-1,6-bisphosphatase class 1 from Halobacterium salinarum (strain ATCC 29341 / DSM 671 / R1).